The primary structure comprises 102 residues: Acid shock protein (102 aa).

Residues 1–21 (MKKVLALVVAAAMGLSSAAFA) form the signal peptide. The segment covering 22–41 (AETATTPAPTATTTKAAPAK) has biased composition (low complexity). The propeptide occupies 22-58 (AETATTPAPTATTTKAAPAKTTHHKKQHKAAPAQKAQ). Residues 22–102 (AETATTPAPT…PAKPAAQPAA (81 aa)) are disordered. Positions 80–90 (AAKKHAKKHSH) are enriched in basic residues. The span at 91–102 (QQPAKPAAQPAA) shows a compositional bias: low complexity.

The protein belongs to the Asr family. In terms of processing, proteolytic processing gives rise to the active protein.

Its subcellular location is the periplasm. Required for growth and/or survival at acidic conditions. This chain is Acid shock protein, found in Escherichia coli O17:K52:H18 (strain UMN026 / ExPEC).